Here is a 159-residue protein sequence, read N- to C-terminus: MHKRAIYPGTFDPVTNGHADLIERAANLFEHVIIGIAANPSKQPRFTLAERVELLKTVTAHLDNVEVVGFSGLLVDFAKEQNASVLVRGLRAVSDFEYEFQLANMNRRLSPDLESVFLTPAEENSFISSTLVKEVALHGGDVSQFVHAEVANALTKKAN.

A substrate-binding site is contributed by threonine 10. ATP is bound by residues 10 to 11 (TF) and histidine 18. The substrate site is built by lysine 42, leucine 74, and arginine 88. ATP-binding positions include 89 to 91 (GLR), glutamate 99, and 124 to 130 (NSFISST).

It belongs to the bacterial CoaD family. In terms of assembly, homohexamer. It depends on Mg(2+) as a cofactor.

It localises to the cytoplasm. The catalysed reaction is (R)-4'-phosphopantetheine + ATP + H(+) = 3'-dephospho-CoA + diphosphate. Its pathway is cofactor biosynthesis; coenzyme A biosynthesis; CoA from (R)-pantothenate: step 4/5. In terms of biological role, reversibly transfers an adenylyl group from ATP to 4'-phosphopantetheine, yielding dephospho-CoA (dPCoA) and pyrophosphate. The polypeptide is Phosphopantetheine adenylyltransferase (Shewanella halifaxensis (strain HAW-EB4)).